The sequence spans 206 residues: Methylthioribulose-1-phosphate dehydratase (206 aa).

Residues His96 and His98 each contribute to the Zn(2+) site.

This sequence belongs to the aldolase class II family. MtnB subfamily. The cofactor is Zn(2+).

The catalysed reaction is 5-(methylsulfanyl)-D-ribulose 1-phosphate = 5-methylsulfanyl-2,3-dioxopentyl phosphate + H2O. Its pathway is amino-acid biosynthesis; L-methionine biosynthesis via salvage pathway; L-methionine from S-methyl-5-thio-alpha-D-ribose 1-phosphate: step 2/6. Catalyzes the dehydration of methylthioribulose-1-phosphate (MTRu-1-P) into 2,3-diketo-5-methylthiopentyl-1-phosphate (DK-MTP-1-P). This is Methylthioribulose-1-phosphate dehydratase from Exiguobacterium sibiricum (strain DSM 17290 / CCUG 55495 / CIP 109462 / JCM 13490 / 255-15).